We begin with the raw amino-acid sequence, 38 residues long: Photosystem II reaction center protein L (38 aa).

Residues 17-37 traverse the membrane as a helical segment; the sequence is SLFIGLLLVLVLALLFSSYFF.

The protein belongs to the PsbL family. In terms of assembly, PSII is composed of 1 copy each of membrane proteins PsbA, PsbB, PsbC, PsbD, PsbE, PsbF, PsbH, PsbI, PsbJ, PsbK, PsbL, PsbM, PsbT, PsbX, PsbY, PsbZ, Psb30/Ycf12, peripheral proteins PsbO, CyanoQ (PsbQ), PsbU, PsbV and a large number of cofactors. It forms dimeric complexes.

It localises to the cellular thylakoid membrane. Functionally, one of the components of the core complex of photosystem II (PSII). PSII is a light-driven water:plastoquinone oxidoreductase that uses light energy to abstract electrons from H(2)O, generating O(2) and a proton gradient subsequently used for ATP formation. It consists of a core antenna complex that captures photons, and an electron transfer chain that converts photonic excitation into a charge separation. This subunit is found at the monomer-monomer interface and is required for correct PSII assembly and/or dimerization. In Acaryochloris marina (strain MBIC 11017), this protein is Photosystem II reaction center protein L.